Here is a 172-residue protein sequence, read N- to C-terminus: Co-chaperone protein HscB (172 aa).

Positions 2–74 (DYFTLFGLPI…LKRAEYMLSL (73 aa)) constitute a J domain.

Belongs to the HscB family. As to quaternary structure, interacts with HscA and stimulates its ATPase activity. Interacts with IscU.

Its function is as follows. Co-chaperone involved in the maturation of iron-sulfur cluster-containing proteins. Seems to help targeting proteins to be folded toward HscA. This Pectobacterium atrosepticum (strain SCRI 1043 / ATCC BAA-672) (Erwinia carotovora subsp. atroseptica) protein is Co-chaperone protein HscB.